Reading from the N-terminus, the 349-residue chain is Anthranilate phosphoribosyltransferase (349 aa).

Residues Gly82, 85–86, 92–95, 110–118, and Ser122 contribute to the 5-phospho-alpha-D-ribose 1-diphosphate site; these read GD, NVSS, and KHGNRAVSG. Gly82 is a binding site for anthranilate. Mg(2+) is bound at residue Ser94. Asn113 lines the anthranilate pocket. Residue Arg168 coordinates anthranilate. Residues Asp227 and Glu228 each coordinate Mg(2+).

Belongs to the anthranilate phosphoribosyltransferase family. As to quaternary structure, homodimer. Requires Mg(2+) as cofactor.

The enzyme catalyses N-(5-phospho-beta-D-ribosyl)anthranilate + diphosphate = 5-phospho-alpha-D-ribose 1-diphosphate + anthranilate. Its pathway is amino-acid biosynthesis; L-tryptophan biosynthesis; L-tryptophan from chorismate: step 2/5. In terms of biological role, catalyzes the transfer of the phosphoribosyl group of 5-phosphorylribose-1-pyrophosphate (PRPP) to anthranilate to yield N-(5'-phosphoribosyl)-anthranilate (PRA). This Pseudomonas aeruginosa (strain LESB58) protein is Anthranilate phosphoribosyltransferase.